The following is a 162-amino-acid chain: Selenoprotein F (162 aa).

The signal sequence occupies residues 1 to 28 (MAARRDGWLGPAFGLRLLLATVLQTVSA). Position 93 (Sec-93) is a non-standard amino acid, selenocysteine.

The protein belongs to the selenoprotein M/F family. In terms of assembly, forms a tight complex with UGGT1/UGCGL1. Interacts with UGGT2/UGCGL2. Interacts with RDH11.

The protein localises to the endoplasmic reticulum lumen. May be involved in redox reactions associated with the formation of disulfide bonds. May contribute to the quality control of protein folding in the endoplasmic reticulum. May regulate protein folding by enhancing the catalytic activity of UGGT1/UGCGL1 and UGGT2/UGCGL2. The protein is Selenoprotein F of Bos taurus (Bovine).